Consider the following 344-residue polypeptide: Ferrochelatase (344 aa).

Fe cation is bound by residues histidine 214 and glutamate 295.

It belongs to the ferrochelatase family.

The protein localises to the cytoplasm. The catalysed reaction is heme b + 2 H(+) = protoporphyrin IX + Fe(2+). It participates in porphyrin-containing compound metabolism; protoheme biosynthesis; protoheme from protoporphyrin-IX: step 1/1. Its function is as follows. Catalyzes the ferrous insertion into protoporphyrin IX. The chain is Ferrochelatase from Rhizobium etli (strain ATCC 51251 / DSM 11541 / JCM 21823 / NBRC 15573 / CFN 42).